The chain runs to 214 residues: MADS-box protein SOC1 (214 aa).

The MADS-box domain occupies 3 to 57 (RGKTQMKRIENATSRQVTFSKRRNGLLKKAFELSVLCDAEVSLIIFSPKGKLYEF). The K-box domain maps to 87-177 (MQHLKYEAAN…SEKWGSHESE (91 aa)). Basic and acidic residues predominate over residues 162-177 (AENEKLSEKWGSHESE). The tract at residues 162–214 (AENEKLSEKWGSHESEVWSNKNQESTGRGDEESSPSSEVETQLFIGLPCSSRK) is disordered. Positions 178-187 (VWSNKNQEST) are enriched in polar residues.

As to quaternary structure, forms a heterodimer with AGL24 through MADS-box domain. Interacts with AGL15, AGL16 and AGL19. Interacts with OXS3 in the nucleus. In terms of tissue distribution, widely expressed. Not found in the apical meristem of short-day grown plants in vegetative stage.

It localises to the nucleus. The protein resides in the cytoplasm. Functionally, transcription activator active in flowering time control. May integrate signals from the photoperiod, vernalization and autonomous floral induction pathways. Can modulate class B and C homeotic genes expression. When associated with AGL24, mediates effect of gibberellins on flowering under short-day conditions, and regulates the expression of LEAFY (LFY), which links floral induction and floral development. The polypeptide is MADS-box protein SOC1 (Arabidopsis thaliana (Mouse-ear cress)).